A 694-amino-acid polypeptide reads, in one-letter code: Transcriptional activator HAA1 (694 aa).

The copper-fist DNA-binding region spans 1–40 (MVLINGIKYACERCIRGHRVTTCNHTDQPLMMIKPKGRPS). Residues cysteine 11, cysteine 14, cysteine 23, and histidine 25 each coordinate Zn(2+). Disordered stretches follow at residues 104 to 128 (QKRH…SQPM) and 209 to 240 (FNFL…DSSV). A compositionally biased stretch (polar residues) spans 111–126 (SPSSSQKKGRSISRSQ). 4 positions are modified to phosphoserine: serine 125, serine 231, serine 241, and serine 291. 4 disordered regions span residues 332–388 (FDIN…NGLF), 479–514 (EKER…HRYP), 566–588 (SSIH…SRQD), and 650–677 (MIST…PPSQ). Positions 336 to 349 (DNCNRINSKSYSKT) are enriched in polar residues. Residues 350–378 (NSMNGNGMNNSNNNNINSNGNDKNNNNSS) show a composition bias toward low complexity. Composition is skewed to polar residues over residues 566-577 (SSIHSVPQSINS) and 664-677 (SPMS…PPSQ).

It is found in the nucleus. In terms of biological role, regulates the transcription of a set of genes, many of which encode membrane proteins. Among the genes regulated are YGR138C and YRO2. Does not seem to be dependent on copper. In Saccharomyces cerevisiae (strain ATCC 204508 / S288c) (Baker's yeast), this protein is Transcriptional activator HAA1 (HAA1).